We begin with the raw amino-acid sequence, 186 residues long: Transcriptional repressor NrdR (186 aa).

The segment at 1–24 (MRCPYCGGLDTQVKDSRPSDDASA) is disordered. A zinc finger lies at 3-34 (CPYCGGLDTQVKDSRPSDDASAIRRRRICPDC). The span at 12 to 24 (QVKDSRPSDDASA) shows a compositional bias: basic and acidic residues. In terms of domain architecture, ATP-cone spans 49–139 (LTVVKRSGRR…VYKNFREARD (91 aa)). Positions 146–186 (RLNGAGRPGGEPEPPDEAAPGPAAAPGEGGEAPARRARSRA) are disordered.

The protein belongs to the NrdR family. The cofactor is Zn(2+).

Its function is as follows. Negatively regulates transcription of bacterial ribonucleotide reductase nrd genes and operons by binding to NrdR-boxes. This chain is Transcriptional repressor NrdR, found in Methylobacterium sp. (strain 4-46).